The primary structure comprises 277 residues: Lectin 1 (277 aa).

A signal peptide spans 1–30 (MSFSSSNFYVILSISLTVFILLFNINKVNS). N-linked (GlcNAc...) asparagine glycosylation occurs at Asn-143. Residues Glu-152 and Asp-154 each contribute to the Mn(2+) site. Ca(2+)-binding residues include Asp-154, Asn-158, and Asp-161. Mn(2+) contacts are provided by Asp-161 and His-167. An N-linked (GlcNAc...) asparagine glycan is attached at Asn-269.

Belongs to the leguminous lectin family.

Functionally, lectin that may be involved in a cell recognition process. This Medicago truncatula (Barrel medic) protein is Lectin 1 (LEC1).